The primary structure comprises 342 residues: Ribosomal RNA small subunit methyltransferase C (342 aa).

It belongs to the methyltransferase superfamily. RsmC family. As to quaternary structure, monomer.

It is found in the cytoplasm. The enzyme catalyses guanosine(1207) in 16S rRNA + S-adenosyl-L-methionine = N(2)-methylguanosine(1207) in 16S rRNA + S-adenosyl-L-homocysteine + H(+). Specifically methylates the guanine in position 1207 of 16S rRNA in the 30S particle. The protein is Ribosomal RNA small subunit methyltransferase C of Salmonella paratyphi A (strain ATCC 9150 / SARB42).